The chain runs to 137 residues: Large ribosomal subunit protein uL16 (137 aa).

The tract at residues 1–22 (MLQPKRTKFRKVQKGRNRGLAH) is disordered.

It belongs to the universal ribosomal protein uL16 family. As to quaternary structure, part of the 50S ribosomal subunit.

Its function is as follows. Binds 23S rRNA and is also seen to make contacts with the A and possibly P site tRNAs. This chain is Large ribosomal subunit protein uL16, found in Chromohalobacter salexigens (strain ATCC BAA-138 / DSM 3043 / CIP 106854 / NCIMB 13768 / 1H11).